We begin with the raw amino-acid sequence, 245 residues long: MNTVIADFTERAGTGRVLKAEPEAIQLAPEQTALIVVDMQNAYTSIGGYLDLAGFDVSKTKPVVENIQKAVTAAHAAGIQVIYFKNGWDNQYVEAGGAGSPNFHKSNALKTMRKQPELQGKLLAKGGWDFELIDELQPKSQDIVIEKPRYSGFFNTALDSMLRARGIRNLVFVGIATNVCVESTLRDGFFLEYFGVALDDACYQAGPVEMHRASMYNIKTFFGWVSDTQSFVNTFQHNQQLAKTA.

D38 (proton acceptor) is an active-site residue. The active site involves K147. The active-site Nucleophile is the C180.

It belongs to the isochorismatase family. RutB subfamily.

It catalyses the reaction (Z)-3-ureidoacrylate + H2O + H(+) = (Z)-3-aminoacrylate + NH4(+) + CO2. It carries out the reaction (Z)-3-ureidoacrylate + H2O = (Z)-3-aminoacrylate + carbamate + H(+). The enzyme catalyses (Z)-2-methylureidoacrylate + H2O + H(+) = (Z)-2-methylaminoacrylate + NH4(+) + CO2. Functionally, hydrolyzes ureidoacrylate to form aminoacrylate and carbamate. The carbamate hydrolyzes spontaneously, thereby releasing one of the nitrogen atoms of the pyrimidine ring as ammonia and one of its carbon atoms as CO2. The sequence is that of Ureidoacrylate amidohydrolase RutB from Acinetobacter baylyi (strain ATCC 33305 / BD413 / ADP1).